We begin with the raw amino-acid sequence, 156 residues long: Small ribosomal subunit protein uS7 (156 aa).

The protein belongs to the universal ribosomal protein uS7 family. Part of the 30S ribosomal subunit. Contacts proteins S9 and S11.

One of the primary rRNA binding proteins, it binds directly to 16S rRNA where it nucleates assembly of the head domain of the 30S subunit. Is located at the subunit interface close to the decoding center, probably blocks exit of the E-site tRNA. The protein is Small ribosomal subunit protein uS7 of Exiguobacterium sibiricum (strain DSM 17290 / CCUG 55495 / CIP 109462 / JCM 13490 / 255-15).